The chain runs to 540 residues: Keratin, type II cytoskeletal 73 (540 aa).

The interval 1–131 (MSRQFTYKSG…DPEIQKVRAQ (131 aa)) is head. Positions 132-167 (EREQIKVLNNKFASFIDKVRFLEQQNQVLETKWELL) are coil 1A. An IF rod domain is found at 132–445 (EREQIKVLNN…KLLEGEECRM (314 aa)). The interval 168 to 186 (QQLDLNNCKNNLEPILEGY) is linker 1. Positions 187–278 (ISNLRKQLET…CLYEGETAQI (92 aa)) are coil 1B. The interval 279–302 (QSHISDTSIILSMDNNRNLDLDSI) is linker 12. The tract at residues 303–441 (IAEVRAQYEE…ATYRKLLEGE (139 aa)) is coil 2. The tract at residues 442–540 (ECRMSGEYTN…LSSPTKKTMR (99 aa)) is tail. Residues 502–540 (SGNCSPRGEARTRLGSASEFRDSQGKTLALSSPTKKTMR) are disordered. The segment covering 526-540 (GKTLALSSPTKKTMR) has biased composition (polar residues).

Belongs to the intermediate filament family. As to quaternary structure, heterotetramer of two type I and two type II keratins. In terms of tissue distribution, highly expressed in hair follicles from scalp. In hair, it is specifically present in the inner root sheath (IRS) of the hair follicle. Present in the IRS cuticle, but not in Henle or Huxley layers of the IRS. In the IRS cuticle, it is expressed between the lowermost bulb region of the cuticle and the region where Henle cells undergo abrupt terminal differentiation. Detected up to the uppermost cortex region where cuticle cells terminally differentiate (at protein level).

Has a role in hair formation. Specific component of keratin intermediate filaments in the inner root sheath (IRS) of the hair follicle. The chain is Keratin, type II cytoskeletal 73 (KRT73) from Homo sapiens (Human).